Here is a 287-residue protein sequence, read N- to C-terminus: MSTLPKTLTLDTSTSRANPTPQPMKRLTVPRIRQRKGGEPIVMLTAYTVRMAQLLDPHCDMLLVGDSLAQVIYGLPHTVGVTMEMMALHGAAVVRGSYHAAVIVDMPFGSYEGSPQQAFDNAARLLKETGAAAVKVEGGKVLAPTIEFLTQRGIPVMGHVGLTPQAVNILGGYGVRGKSEEEARSIVEDAVAVAQAGAFSIVIEGVLESIAIEITNKVACPTIGIGASAQCDGQVLVTDDMLGMFERVPKFVKRYRDMAGVVSGAVQDYADEVRSRSFPTEDQIYAG.

Over residues 1 to 19 the composition is skewed to polar residues; it reads MSTLPKTLTLDTSTSRANP. Residues 1-24 are disordered; the sequence is MSTLPKTLTLDTSTSRANPTPQPM. Mg(2+) is bound by residues aspartate 66 and aspartate 105. 3-methyl-2-oxobutanoate-binding positions include 66-67, aspartate 105, and lysine 135; that span reads DS. Position 137 (glutamate 137) interacts with Mg(2+). Glutamate 204 functions as the Proton acceptor in the catalytic mechanism.

Belongs to the PanB family. In terms of assembly, homodecamer; pentamer of dimers. Requires Mg(2+) as cofactor.

It is found in the cytoplasm. It carries out the reaction 3-methyl-2-oxobutanoate + (6R)-5,10-methylene-5,6,7,8-tetrahydrofolate + H2O = 2-dehydropantoate + (6S)-5,6,7,8-tetrahydrofolate. The protein operates within cofactor biosynthesis; (R)-pantothenate biosynthesis; (R)-pantoate from 3-methyl-2-oxobutanoate: step 1/2. Functionally, catalyzes the reversible reaction in which hydroxymethyl group from 5,10-methylenetetrahydrofolate is transferred onto alpha-ketoisovalerate to form ketopantoate. This Sphingopyxis alaskensis (strain DSM 13593 / LMG 18877 / RB2256) (Sphingomonas alaskensis) protein is 3-methyl-2-oxobutanoate hydroxymethyltransferase.